The chain runs to 1211 residues: Periplasmic acid trehalase ATC1 (1211 aa).

Over 1 to 46 (MKRIRSLWFNAEASYSNLNNSPSLRNKNSTGNNSRSKNYRSFSRFD) the chain is Cytoplasmic. A helical membrane pass occupies residues 47-67 (LINSILLLMMLFLLAIFVTAL). Over 68–1211 (YLTKSSRLTY…ATIKEIVLND (1144 aa)) the chain is Periplasmic. The tract at residues 70–131 (TKSSRLTYSH…NTAYYDDENM (62 aa)) is required for cell surface targeting. 10 N-linked (GlcNAc...) asparagine glycosylation sites follow: N98, N207, N238, N247, N255, N259, N325, N370, N376, and N488. Substrate is bound at residue 513 to 514 (WD). N-linked (GlcNAc...) asparagine glycans are attached at residues N539, N568, N628, and N638. E644 acts as the Proton donor in catalysis. Residues N696 and N705 are each glycosylated (N-linked (GlcNAc...) asparagine). 711-712 (KQ) lines the substrate pocket. N-linked (GlcNAc...) asparagine glycans are attached at residues N879, N897, N910, N972, N990, N1031, N1049, N1064, N1147, and N1157.

It belongs to the glycosyl hydrolase 65 family. Post-translationally, glycosylated.

The protein localises to the membrane. The protein resides in the vacuole lumen. It is found in the periplasm. It catalyses the reaction alpha,alpha-trehalose + H2O = alpha-D-glucose + beta-D-glucose. Periplasmic acid trehalase that catalyzes hydrolysis of the disaccharide trehalose and required for growth on trehalose as carbon source. Growth on trehalose is strictly respiratory. The protein is Periplasmic acid trehalase ATC1 of Saccharomyces cerevisiae (strain CEN.PK113-7D) (Baker's yeast).